A 106-amino-acid chain; its full sequence is Iron-sulfur cluster assembly protein CyaY (106 aa).

Belongs to the frataxin family.

Its function is as follows. Involved in iron-sulfur (Fe-S) cluster assembly. May act as a regulator of Fe-S biogenesis. This Salmonella dublin (strain CT_02021853) protein is Iron-sulfur cluster assembly protein CyaY.